Reading from the N-terminus, the 214-residue chain is Rhodanese-like domain-containing protein 10 (214 aa).

The Rhodanese domain occupies 58–182 (ASEGYILLDV…VSEGDFPEIE (125 aa)). C142 functions as the Cysteine persulfide intermediate in the catalytic mechanism. Residues 190-206 (ATIGGVSFYLLKLLVLL) form a helical membrane-spanning segment.

It localises to the membrane. The polypeptide is Rhodanese-like domain-containing protein 10 (STR10) (Arabidopsis thaliana (Mouse-ear cress)).